We begin with the raw amino-acid sequence, 219 residues long: Orotate phosphoribosyltransferase (219 aa).

K26 is a 5-phospho-alpha-D-ribose 1-diphosphate binding site. 34–35 (FF) provides a ligand contact to orotate. 5-phospho-alpha-D-ribose 1-diphosphate contacts are provided by residues 72–73 (YK), R98, K99, K102, H104, and 124–132 (DDVITAGTA). Orotate is bound by residues T128 and R156.

It belongs to the purine/pyrimidine phosphoribosyltransferase family. PyrE subfamily. In terms of assembly, homodimer. Mg(2+) serves as cofactor.

It catalyses the reaction orotidine 5'-phosphate + diphosphate = orotate + 5-phospho-alpha-D-ribose 1-diphosphate. Its pathway is pyrimidine metabolism; UMP biosynthesis via de novo pathway; UMP from orotate: step 1/2. Functionally, catalyzes the transfer of a ribosyl phosphate group from 5-phosphoribose 1-diphosphate to orotate, leading to the formation of orotidine monophosphate (OMP). In Xylella fastidiosa (strain 9a5c), this protein is Orotate phosphoribosyltransferase.